The primary structure comprises 427 residues: MSSNAQLFDRACRSIPGGVNSPVRAFRSVGGTPRFIKRAQGPYVWDEEDTRYIDYVGSWGPAILGHAHPDVVQAVREAALDGLSFGAPTRAEVELAEVLIERLPSLEQVRLVSSGTEATMTAIRLARGATGRAKIIKFEGCYHGHSDSLLVKAGSGLLTFGNPSSAGVPPEFVSHTLTLEYNNLAAVQAAFAQHGADIACVIVEPVAGNMNLIKPAAGFLQGLRDVCTQHGAVLIFDEVMTGFRVGPQGVQGLAGIKPDLTTLAKVIGGGMPVGALGGRADLMAHLAPLGGVYQAGTLSGNPVAVAAGLATLRLIAQPGFYEQLAAQTQRLTDGLRQRARAAGIPFAADAIGGMFGLYFQDSVPTSFAEVSAGDADAFKRFFHAMLDRGVHFAPSAFEAGFVSATHDNAVIDATLDAAEAVFAAMKG.

Position 265 is an N6-(pyridoxal phosphate)lysine (Lys-265).

It belongs to the class-III pyridoxal-phosphate-dependent aminotransferase family. HemL subfamily. As to quaternary structure, homodimer. Pyridoxal 5'-phosphate is required as a cofactor.

The protein localises to the cytoplasm. It carries out the reaction (S)-4-amino-5-oxopentanoate = 5-aminolevulinate. The protein operates within porphyrin-containing compound metabolism; protoporphyrin-IX biosynthesis; 5-aminolevulinate from L-glutamyl-tRNA(Glu): step 2/2. This chain is Glutamate-1-semialdehyde 2,1-aminomutase, found in Bordetella petrii (strain ATCC BAA-461 / DSM 12804 / CCUG 43448).